The primary structure comprises 286 residues: MTKIAEKSKQEYGDLLKEKDHLQDMEQLEMTIVSIQTPYPSIVRIQGKINTLQPELWQAPNLAIRLIVSNPPEGQPISRVYTVRSFNPINAQIEIDFVKHEDLSPAMEWLNSAQVGTKIGLIGPRPHFIPNFTAKKHVVMFADDTAVPALYSILKQWELGISADIFIESFEKDIASQLPELEHVKIHSFHKEHHTSQKGLLLKAAFALEHYENITIWAACERNEARALRQFFLEDQQLNKNDVRIAGYWRDGVSSSELDKLRAQHYQEHIQQGKTLNEYDDLDLAN.

In terms of domain architecture, FAD-binding FR-type spans 25–131 (MEQLEMTIVS…IGPRPHFIPN (107 aa)). Positions 79, 80, 82, 96, 98, 100, 102, 104, 106, 250, 252, and 255 each coordinate FAD.

This sequence belongs to the SIP oxidoreductase family. As to quaternary structure, monomer in solution. The cofactor is FAD.

It catalyses the reaction 2 a Fe(II)-siderophore + NAD(+) + H(+) = 2 a Fe(III)-siderophore + NADH. The enzyme catalyses 2 a Fe(II)-siderophore + NADP(+) + H(+) = 2 a Fe(III)-siderophore + NADPH. Ferric-siderophore reductase involved in iron removal from the siderophores after their transport into the cell. Interacts with the siderophores acinetobactin (Acb) and preacinetobactin (pre-Acb) and catalyzes the reduction of the ferric iron bound to the siderophores to ferrous iron, resulting in destabilization of the siderophore chelation complex and entrance of ferrous iron into the intracellular pool of bioavailable metals. Can use NADH and NADPH as electron donors in vitro, but the reduction rate is very slow, suggesting that NADH and NADPH are not the physiological partners of BauF. This is Ferric acinetobactin reductase from Acinetobacter baumannii.